A 364-amino-acid polypeptide reads, in one-letter code: Anionic peroxidase (364 aa).

A signal peptide spans 1-20 (MASFMKQLSLVLSFIALALA). Positions 21–66 (GCAVYQNTQTAMKDQLKVTPTWLDNTLKSTNLLSLGLGKPSGGKLG) are excised as a propeptide. His-99 serves as the catalytic Proton acceptor. Residues Asp-100, Val-103, Gly-105, and Asp-107 each coordinate Ca(2+). A disulfide bridge links Cys-101 with Cys-106. N-linked (GlcNAc...) asparagine glycans are attached at residues Asn-113, Asn-188, Asn-202, and Asn-216. 2 disulfides stabilise this stretch: Cys-155-Cys-343 and Cys-234-Cys-255. Heme b is bound at residue His-227. Position 228 (Thr-228) interacts with Ca(2+). Asn-254 and Asn-260 each carry an N-linked (GlcNAc...) asparagine glycan. Residues Asp-268, Thr-270, and Asp-275 each coordinate Ca(2+). Asn-299 carries N-linked (GlcNAc...) asparagine glycosylation.

Belongs to the peroxidase family. Classical plant (class III) peroxidase subfamily. Ca(2+) serves as cofactor. Heme b is required as a cofactor. As to expression, highly expressed in suspension cultured cells and calli. Weak expression also found in the stems of intact plants. No expression in leaf, tuberous root and non-tuberous root.

It localises to the secreted. It catalyses the reaction 2 a phenolic donor + H2O2 = 2 a phenolic radical donor + 2 H2O. Its function is as follows. Removal of H(2)O(2), oxidation of toxic reductants, biosynthesis and degradation of lignin, suberization, auxin catabolism, response to environmental stresses such as wounding, pathogen attack and oxidative stress. These functions might be dependent on each isozyme/isoform in each plant tissue. Functionally, may contribute to protection against cold-induced oxidative stress. The polypeptide is Anionic peroxidase (Ipomoea batatas (Sweet potato)).